The sequence spans 139 residues: ATP synthase epsilon chain (139 aa).

Belongs to the ATPase epsilon chain family. F-type ATPases have 2 components, CF(1) - the catalytic core - and CF(0) - the membrane proton channel. CF(1) has five subunits: alpha(3), beta(3), gamma(1), delta(1), epsilon(1). CF(0) has three main subunits: a, b and c.

The protein resides in the cell inner membrane. In terms of biological role, produces ATP from ADP in the presence of a proton gradient across the membrane. This Pseudomonas entomophila (strain L48) protein is ATP synthase epsilon chain.